A 444-amino-acid chain; its full sequence is Elongation factor 1-alpha (444 aa).

The tr-type G domain occupies 14–235; the sequence is KPHLNLAIIG…ALDAIEPPPR (222 aa). A G1 region spans residues 23–30; sequence GHVDHGKS. Position 23–30 (23–30) interacts with GTP; the sequence is GHVDHGKS. Mg(2+) is bound at residue S30. Residues 79-83 are G2; it reads GVTIE. The tract at residues 100–103 is G3; it reads DLPG. GTP is bound by residues 100–104 and 162–165; these read DLPGH and NKMD. Residues 162–165 are G4; the sequence is NKMD. Residues 201–203 are G5; that stretch reads SAV.

The protein belongs to the TRAFAC class translation factor GTPase superfamily. Classic translation factor GTPase family. EF-Tu/EF-1A subfamily.

It localises to the cytoplasm. It carries out the reaction GTP + H2O = GDP + phosphate + H(+). GTP hydrolase that promotes the GTP-dependent binding of aminoacyl-tRNA to the A-site of ribosomes during protein biosynthesis. This is Elongation factor 1-alpha from Caldivirga maquilingensis (strain ATCC 700844 / DSM 13496 / JCM 10307 / IC-167).